A 408-amino-acid chain; its full sequence is Neutral cholesterol ester hydrolase 1 (408 aa).

The Cytoplasmic portion of the chain corresponds to 1-4 (MRSS). A helical; Signal-anchor for type II membrane protein membrane pass occupies residues 5 to 25 (CVLLTALVALAAYYVYIPLPG). Residues 26–408 (SVSDPWKLML…SYIKWLDQNL (383 aa)) lie on the Lumenal side of the membrane. An Involved in the stabilization of the negatively charged intermediate by the formation of the oxyanion hole motif is present at residues 113–115 (HGG). Serine 191 is a catalytic residue. 2 N-linked (GlcNAc...) asparagine glycosylation sites follow: asparagine 270 and asparagine 287. Active-site residues include aspartate 348 and histidine 378. N-linked (GlcNAc...) asparagine glycosylation occurs at asparagine 389.

It belongs to the 'GDXG' lipolytic enzyme family. Post-translationally, N-glycosylated.

It localises to the cell membrane. Its subcellular location is the microsome. It catalyses the reaction a 1-O-alkyl-2-acetyl-sn-glycerol + H2O = a 1-O-alkyl-sn-glycerol + acetate + H(+). It carries out the reaction 1-O-hexadecyl-2-acetyl-sn-glycerol + H2O = 1-O-hexadecyl-sn-glycerol + acetate + H(+). The catalysed reaction is a cholesterol ester + H2O = cholesterol + a fatty acid + H(+). The enzyme catalyses cholesteryl (9Z-octadecenoate) + H2O = cholesterol + (9Z)-octadecenoate + H(+). Hydrolyzes 2-acetyl monoalkylglycerol ether (1-O-alkyl-2-acetyl-sn-glycerol), the penultimate precursor of the pathway for de novo synthesis of platelet-activating factor. May be responsible for the hydrolysis of cholesterol esters (such as cholesteryl (9Z-octadecenoate)) in macrophages. Also involved in organ detoxification by hydrolyzing exogenous organophosphorus compounds. The sequence is that of Neutral cholesterol ester hydrolase 1 (NCEH1) from Pongo abelii (Sumatran orangutan).